Here is a 463-residue protein sequence, read N- to C-terminus: Phosphomethylpyrimidine synthase (463 aa).

Substrate-binding positions include Asn-80, Met-109, Tyr-138, His-173, 193 to 195, 234 to 237, and Glu-273; these read SRG and DGLR. His-277 contributes to the Zn(2+) binding site. Tyr-300 contacts substrate. Position 341 (His-341) interacts with Zn(2+). Cys-421, Cys-424, and Cys-429 together coordinate [4Fe-4S] cluster.

Belongs to the ThiC family. In terms of assembly, homodimer. Requires [4Fe-4S] cluster as cofactor.

The catalysed reaction is 5-amino-1-(5-phospho-beta-D-ribosyl)imidazole + S-adenosyl-L-methionine = 4-amino-2-methyl-5-(phosphooxymethyl)pyrimidine + CO + 5'-deoxyadenosine + formate + L-methionine + 3 H(+). Its pathway is cofactor biosynthesis; thiamine diphosphate biosynthesis. Its function is as follows. Catalyzes the synthesis of the hydroxymethylpyrimidine phosphate (HMP-P) moiety of thiamine from aminoimidazole ribotide (AIR) in a radical S-adenosyl-L-methionine (SAM)-dependent reaction. In Anaeromyxobacter sp. (strain K), this protein is Phosphomethylpyrimidine synthase.